Reading from the N-terminus, the 493-residue chain is Cysteine--tRNA ligase (493 aa).

Cys31 serves as a coordination point for Zn(2+). Positions 33 to 43 (PTVYGDAHLGH) match the 'HIGH' region motif. Cys226, His251, and Glu255 together coordinate Zn(2+). Positions 283-287 (KMGKS) match the 'KMSKS' region motif. Residue Lys286 participates in ATP binding.

It belongs to the class-I aminoacyl-tRNA synthetase family. In terms of assembly, monomer. It depends on Zn(2+) as a cofactor.

Its subcellular location is the cytoplasm. The catalysed reaction is tRNA(Cys) + L-cysteine + ATP = L-cysteinyl-tRNA(Cys) + AMP + diphosphate. The sequence is that of Cysteine--tRNA ligase from Bacteroides thetaiotaomicron (strain ATCC 29148 / DSM 2079 / JCM 5827 / CCUG 10774 / NCTC 10582 / VPI-5482 / E50).